Consider the following 268-residue polypeptide: Undecaprenyl-diphosphatase (268 aa).

7 helical membrane passes run 47 to 67 (FAVLIQLGAILAILALYFVKL), 83 to 103 (FVIGVLVAFLPAAVIGAAFGG), 109 to 129 (LFNPWVVCFSLIVGGAILLWV), 144 to 164 (FPLLTYFYIGCAQCTAMIPGV), 184 to 204 (AAEFSFFLAIPTMLGAFVYDL), 217 to 237 (IIVAIGFVVSFITAIIVVKTF), and 248 to 268 (LFAWWRVIVGTLGLIALALGL).

It belongs to the UppP family.

The protein resides in the cell inner membrane. It carries out the reaction di-trans,octa-cis-undecaprenyl diphosphate + H2O = di-trans,octa-cis-undecaprenyl phosphate + phosphate + H(+). Catalyzes the dephosphorylation of undecaprenyl diphosphate (UPP). Confers resistance to bacitracin. The protein is Undecaprenyl-diphosphatase of Rhodopseudomonas palustris (strain ATCC BAA-98 / CGA009).